Consider the following 1024-residue polypeptide: Protein tiptop (1024 aa).

A compositionally biased stretch (polar residues) spans 20 to 35; it reads ELTSPRCQSRDSNTSA. Disordered stretches follow at residues 20-40 and 138-215; these read ELTS…AGAG and EGEV…ISAD. The segment covering 159-175 has biased composition (acidic residues); sequence DDQEEDQEQDQEQEQEQ. The segment at 317-341 adopts a C2H2-type 1 zinc-finger fold; the sequence is FKCVWCKQSFSTLANLTAHMKETQH. The disordered stretch occupies residues 350–392; that stretch reads LPTGGVGTPSAPPPTRLATSASNSACSSSSSSTSSSSNSSKSE. Residues 368–391 show a composition bias toward low complexity; sequence TSASNSACSSSSSSTSSSSNSSKS. Residues 426 to 450 form a C2H2-type 2 zinc finger; that stretch reads LKCMWCGQSFRSLAEMTSHMQETQH. 5 disordered regions span residues 466-489, 519-576, 712-759, 786-818, and 868-891; these read GDER…SSPS, AQKS…SLDS, SRDR…IKAE, FSME…SLLA, and ETTD…ASAT. A compositionally biased stretch (low complexity) spans 477–489; sequence VPSTSTAAPSSPS. Residues 499–523 form a C2H2-type 3 zinc finger; that stretch reads LTCKVCDQAFGSLKELSTHMAQKSH. Positions 527–537 are enriched in low complexity; it reads SPAPSASPPAA. Residues 543 to 558 are compositionally biased toward basic residues; sequence KRGRQNRNEKRKKSLP. The span at 718 to 729 shows a compositional bias: low complexity; that stretch reads SESSSASRVESS. Residues 745–755 are compositionally biased toward pro residues; the sequence is TPAPPPPPPPT. The segment covering 786–795 has biased composition (basic and acidic residues); it reads FSMEACRESP. The span at 796–808 shows a compositional bias: polar residues; the sequence is RSVSKSPAPQTER. Residues 874–891 are compositionally biased toward low complexity; the sequence is STGLRSASSAGSSTASAT. The segment at 926–949 adopts a C2H2-type 4 zinc-finger fold; sequence IKCSYCDTPFASKGAYRHHLSKVH. A disordered region spans residues 954–1004; it reads AGEDSPRLKSPAVQSPRSMPLASPRRSASRSPATGSQQPPPSPTISPYDES. Over residues 968-990 the composition is skewed to low complexity; it reads SPRSMPLASPRRSASRSPATGSQ.

Belongs to the teashirt C2H2-type zinc-finger protein family. As to expression, expression in the Malpighian tubules (MTs) and stomatogastric nervous system starts at embryonic stage 10. At stage 11, expression in the head domain is initiated in the clypeolabrum in two bilaterally symmetric clusters of cells. At stage 12, expression appears in the central nervous system (CNS) of the trunk and the epidermis. The staining in the hindgut is maintained throughout embryogenesis. At stage 13, expression is present in elongating MTs. The anterior staining is detected in cells that invaginate into the stomodeum and by stage 15 onwards, in cells close to the pharynx. Also expressed in cells of the brain, the second constriction of the gut, the trunk epidermis, the anterior segments of the CNS (the three thoracic and the first two abdominal segments) and in the MTs. From stage 12 onwards, tsh and tio are colocalized in some cells.

It is found in the nucleus. In terms of biological role, tiptop (tio) and teashirt (tsh) have, on the whole, common activities. Tio and tsh repress each other's expression and tsh has a crucial role for trunk patterning that is in part masked by ectopic expression of tiptop. Both genes share a common activity required for the activation of Ser and svb and the maintenance of en and wg. The chain is Protein tiptop (tio) from Drosophila melanogaster (Fruit fly).